The chain runs to 1134 residues: Nck-associated protein 1-like (1134 aa).

The disordered stretch occupies residues 638-671; the sequence is KAKNKKSMKQRQAPRKGEPERDKPGAESHRKNRS. Basic residues predominate over residues 639–651; that stretch reads AKNKKSMKQRQAP. Residues 652 to 666 show a composition bias toward basic and acidic residues; that stretch reads RKGEPERDKPGAESH. The chain crosses the membrane as a helical span at residues 999–1019; the sequence is LLLIFLAVSLPLLATDPSSFF.

As to quaternary structure, in hematopoietic cells, component of the WAVE2 complex composed of ABI1, CYFIP1/SRA1, NCKAP1L/HEM1 and WASF2/WAVE2. Interacts with ARHGAP4, PIK3C3/VPS34 and PPP1R12A/MYPT1. Interacts with mammalian target of rapamycin complex 2 (mTORC2) components, including MTOR and RICTOR. Predominantly expressed in developing and mature hematopoietic cells. Also detected in urogenital tissues, including testis.

The protein resides in the membrane. It localises to the cytoplasm. Functionally, essential hematopoietic-specific regulator of the actin cytoskeleton. Controls lymphocyte development, activation, proliferation and homeostasis, erythrocyte membrane stability, as well as phagocytosis and migration by neutrophils and macrophages. Component of the WAVE2 complex which signals downstream of RAC to stimulate F-actin polymerization. Required for stabilization and/or translation of the WAVE2 complex proteins in hematopoietic cells. Within the WAVE2 complex, enables the cortical actin network to restrain excessive degranulation and granule release by T-cells. Required for efficient T-lymphocyte and neutrophil migration. Exhibits complex cycles of activation and inhibition to generate waves of propagating the assembly with actin. Also involved in mechanisms WAVE independent to regulate myosin and actin polymerization during neutrophil chemotaxis. In T-cells, required for proper mechanistic target of rapamycin complex 2 (mTORC2)-dependent AKT phosphorylation, cell proliferation and cytokine secretion, including that of IL2 and TNF. The chain is Nck-associated protein 1-like from Mus musculus (Mouse).